The chain runs to 83 residues: Mu-theraphotoxin-Hhn2b 2 (83 aa).

Positions 1-21 (MKASMFLALAGLVLLFVVCYA) are cleaved as a signal peptide. Residues 22–48 (SESEEKEFPRELISKIFTVDDFKGEER) constitute a propeptide that is removed on maturation. 3 cysteine pairs are disulfide-bonded: C50-C65, C57-C70, and C64-C77. Position 81 is a leucine amide (L81).

The protein belongs to the neurotoxin 10 (Hwtx-1) family. 14 (Hntx-1) subfamily. As to quaternary structure, monomer. Expressed by the venom gland.

Its subcellular location is the secreted. Weakly blocks the rat SCN2A/SCN1B (Nav1.2/beta-1) sodium channel (IC(50)=68 uM) and the insect sodium channel para/tipE (IC(50)=4.3 uM), without altering the activation or inactivation kinetics (depressant toxin). This chain is Mu-theraphotoxin-Hhn2b 2, found in Cyriopagopus hainanus (Chinese bird spider).